Consider the following 210-residue polypeptide: Fibrillarin-like rRNA/tRNA 2'-O-methyltransferase (210 aa).

The segment at 1–34 is disordered; the sequence is MTLPSGVERHDFGGETSLATQGQPVYGERTDGDW. Residues 71–72, 87–88, 112–113, and 132–135 each bind S-adenosyl-L-methionine; these read TT, EF, DA, and DVAT.

Belongs to the methyltransferase superfamily. Fibrillarin family. In terms of assembly, interacts with nop5. Component of box C/D small ribonucleoprotein (sRNP) particles that contain rpl7ae, FlpA and nop5, plus a guide RNA.

In terms of biological role, involved in pre-rRNA and tRNA processing. Utilizes the methyl donor S-adenosyl-L-methionine to catalyze the site-specific 2'-hydroxyl methylation of ribose moieties in rRNA and tRNA. Site specificity is provided by a guide RNA that base pairs with the substrate. Methylation occurs at a characteristic distance from the sequence involved in base pairing with the guide RNA. In Haloarcula marismortui (strain ATCC 43049 / DSM 3752 / JCM 8966 / VKM B-1809) (Halobacterium marismortui), this protein is Fibrillarin-like rRNA/tRNA 2'-O-methyltransferase.